The chain runs to 87 residues: UPF0250 protein ESA_02696 (87 aa).

This sequence belongs to the UPF0250 family.

The sequence is that of UPF0250 protein ESA_02696 from Cronobacter sakazakii (strain ATCC BAA-894) (Enterobacter sakazakii).